The chain runs to 638 residues: Ubiquitin-like-specific protease 2 (638 aa).

Positions methionine 1–serine 12 are enriched in basic and acidic residues. Disordered regions lie at residues methionine 1–leucine 79 and proline 238–aspartate 314. The span at proline 238–threonine 249 shows a compositional bias: polar residues. The span at serine 250–serine 264 shows a compositional bias: low complexity. Positions threonine 267 to aspartate 314 are enriched in polar residues. Catalysis depends on residues histidine 440 and aspartate 494. At threonine 526 the chain carries Phosphothreonine. Cysteine 544 is a catalytic residue. Over residues asparagine 610–serine 619 the composition is skewed to polar residues. The tract at residues asparagine 610–asparagine 638 is disordered. A compositionally biased stretch (acidic residues) spans asparagine 620 to leucine 631.

It belongs to the peptidase C48 family.

The protein resides in the nucleus. The chain is Ubiquitin-like-specific protease 2 (ulp2) from Schizosaccharomyces pombe (strain 972 / ATCC 24843) (Fission yeast).